Consider the following 339-residue polypeptide: Phosphoribosylformylglycinamidine cyclo-ligase (339 aa).

The protein belongs to the AIR synthase family.

It localises to the cytoplasm. The enzyme catalyses 2-formamido-N(1)-(5-O-phospho-beta-D-ribosyl)acetamidine + ATP = 5-amino-1-(5-phospho-beta-D-ribosyl)imidazole + ADP + phosphate + H(+). It functions in the pathway purine metabolism; IMP biosynthesis via de novo pathway; 5-amino-1-(5-phospho-D-ribosyl)imidazole from N(2)-formyl-N(1)-(5-phospho-D-ribosyl)glycinamide: step 2/2. This is Phosphoribosylformylglycinamidine cyclo-ligase from Desulfitobacterium hafniense (strain DSM 10664 / DCB-2).